A 363-amino-acid polypeptide reads, in one-letter code: Ribonuclease D (363 aa).

One can recognise a 3'-5' exonuclease domain in the interval 5 to 168 (ITHPSELTDR…AIHDELTRRL (164 aa)). The region spanning 208–288 (EPAAQRRLLR…NTPLPDEEHA (81 aa)) is the HRDC domain.

The protein belongs to the RNase D family. The cofactor is a divalent metal cation.

Its subcellular location is the cytoplasm. The catalysed reaction is Exonucleolytic cleavage that removes extra residues from the 3'-terminus of tRNA to produce 5'-mononucleotides.. Its function is as follows. Exonuclease involved in the 3' processing of various precursor tRNAs. Initiates hydrolysis at the 3'-terminus of an RNA molecule and releases 5'-mononucleotides. This chain is Ribonuclease D, found in Xanthomonas oryzae pv. oryzae (strain KACC10331 / KXO85).